The chain runs to 378 residues: Protein FAM170B (378 aa).

Disordered stretches follow at residues 1–56, 244–265, and 277–378; these read MKHH…LPDD, TRDQ…DSSE, and QQQP…QQGK. 2 stretches are compositionally biased toward low complexity: residues 277–339 and 349–378; these read QQQP…QPLQ and PQKQ…QQGK.

Belongs to the FAM170 family. Interacts with GOPC. In terms of tissue distribution, exclusively expressed in adult testis (at protein level). Expression first started at postnatal week 3 in round spermatids, elongated spermatids and mature sperm.

It localises to the cytoplasmic vesicle. It is found in the secretory vesicle. The protein localises to the acrosome. The protein resides in the acrosome outer membrane. In terms of biological role, plays a role in fertilization through the acrosome reaction. This Mus musculus (Mouse) protein is Protein FAM170B.